The following is a 258-amino-acid chain: Imidazole glycerol phosphate synthase subunit HisF (258 aa).

Residues Asp-11 and Asp-130 contribute to the active site.

It belongs to the HisA/HisF family. Heterodimer of HisH and HisF.

The protein localises to the cytoplasm. The catalysed reaction is 5-[(5-phospho-1-deoxy-D-ribulos-1-ylimino)methylamino]-1-(5-phospho-beta-D-ribosyl)imidazole-4-carboxamide + L-glutamine = D-erythro-1-(imidazol-4-yl)glycerol 3-phosphate + 5-amino-1-(5-phospho-beta-D-ribosyl)imidazole-4-carboxamide + L-glutamate + H(+). The protein operates within amino-acid biosynthesis; L-histidine biosynthesis; L-histidine from 5-phospho-alpha-D-ribose 1-diphosphate: step 5/9. Its function is as follows. IGPS catalyzes the conversion of PRFAR and glutamine to IGP, AICAR and glutamate. The HisF subunit catalyzes the cyclization activity that produces IGP and AICAR from PRFAR using the ammonia provided by the HisH subunit. The sequence is that of Imidazole glycerol phosphate synthase subunit HisF from Escherichia coli O6:K15:H31 (strain 536 / UPEC).